We begin with the raw amino-acid sequence, 141 residues long: Auxin-responsive protein SAUR62 (141 aa).

It belongs to the ARG7 family. Expressed in stamen filaments and petals.

The protein localises to the cell membrane. In terms of biological role, may promote auxin-stimulated organ elongation, such as hypocotyls, stamen filaments and petals. This chain is Auxin-responsive protein SAUR62, found in Arabidopsis thaliana (Mouse-ear cress).